Reading from the N-terminus, the 88-residue chain is Large ribosomal subunit protein bL31B (88 aa).

It belongs to the bacterial ribosomal protein bL31 family. Type B subfamily. As to quaternary structure, part of the 50S ribosomal subunit.

This Pasteurella multocida (strain Pm70) protein is Large ribosomal subunit protein bL31B.